The sequence spans 131 residues: Profilin-6 (131 aa).

This sequence belongs to the profilin family. In terms of assembly, occurs in many kinds of cells as a complex with monomeric actin in a 1:1 ratio.

It localises to the cytoplasm. The protein localises to the cytoskeleton. Its function is as follows. Binds to actin and affects the structure of the cytoskeleton. At high concentrations, profilin prevents the polymerization of actin, whereas it enhances it at low concentrations. By binding to PIP2, it inhibits the formation of IP3 and DG. The protein is Profilin-6 of Hevea brasiliensis (Para rubber tree).